Here is a 466-residue protein sequence, read N- to C-terminus: Protein hob1 (466 aa).

Residues 17–269 (LRSKFNVGEI…RGDVKDRAEA (253 aa)) enclose the BAR domain. Coiled coils occupy residues 31–67 (IYED…LNHQ) and 177–204 (EKKL…LKEE). The segment at 280 to 342 (PTYKRPGMGP…ASDYSTPSAG (63 aa)) is disordered. Positions 294–303 (ATASSSSSFS) are enriched in low complexity. Phosphoserine occurs at positions 298, 299, 301, and 303. Positions 407–466 (PAAEHVVALYDYAAQAAGDLSFHAGDRIEVVSRTDNQNEWWIGRLNGAQGQFPGNYVQLE) constitute an SH3 domain.

Its function is as follows. Has a role in DNA damage signaling as a part of stress response processes. The chain is Protein hob1 (hob1) from Schizosaccharomyces pombe (strain 972 / ATCC 24843) (Fission yeast).